The following is a 260-amino-acid chain: Type III pantothenate kinase (260 aa).

ATP is bound at residue Asp6–Lys13. Residues Tyr100 and Gly107 to Arg110 contribute to the substrate site. Catalysis depends on Asp109, which acts as the Proton acceptor. Residue Thr133 participates in ATP binding. Thr186 lines the substrate pocket.

This sequence belongs to the type III pantothenate kinase family. As to quaternary structure, homodimer. NH4(+) is required as a cofactor. The cofactor is K(+).

It is found in the cytoplasm. It carries out the reaction (R)-pantothenate + ATP = (R)-4'-phosphopantothenate + ADP + H(+). Its pathway is cofactor biosynthesis; coenzyme A biosynthesis; CoA from (R)-pantothenate: step 1/5. Its function is as follows. Catalyzes the phosphorylation of pantothenate (Pan), the first step in CoA biosynthesis. In Janthinobacterium sp. (strain Marseille) (Minibacterium massiliensis), this protein is Type III pantothenate kinase.